The following is a 154-amino-acid chain: DNA gyrase inhibitor (154 aa).

The protein belongs to the DNA gyrase inhibitor family. Interacts with DNA gyrase.

The protein localises to the cytoplasm. Inhibits the supercoiling activity of DNA gyrase. Acts by inhibiting DNA gyrase at an early step, prior to (or at the step of) binding of DNA by the gyrase. It protects cells against toxins that target DNA gyrase, by inhibiting activity of these toxins and reducing the formation of lethal double-strand breaks in the cell. The polypeptide is DNA gyrase inhibitor (Pectobacterium carotovorum subsp. carotovorum (strain PC1)).